Here is a 421-residue protein sequence, read N- to C-terminus: Histidine--tRNA ligase (421 aa).

It belongs to the class-II aminoacyl-tRNA synthetase family. In terms of assembly, homodimer.

The protein resides in the cytoplasm. It catalyses the reaction tRNA(His) + L-histidine + ATP = L-histidyl-tRNA(His) + AMP + diphosphate + H(+). The protein is Histidine--tRNA ligase of Francisella tularensis subsp. tularensis (strain SCHU S4 / Schu 4).